The primary structure comprises 429 residues: Putative chloride channel protein ClcB-like (429 aa).

The next 11 membrane-spanning stretches (helical) occupy residues 1 to 21 (MLAI…AFRE), 44 to 64 (LPWW…GLTL), 146 to 166 (LLVA…PIAG), 168 to 188 (VFVC…PLLV), 200 to 220 (FFGY…GWEV), 221 to 241 (LTYL…LGLI), 259 to 279 (LALG…VWGN), 283 to 303 (VVNG…VLVC), 315 to 335 (GAVG…GLLY), 354 to 376 (AVVG…ILMI), and 383 to 405 (YQVV…ATGA).

This sequence belongs to the chloride channel (TC 2.A.49) family. ClcB subfamily.

Its subcellular location is the cell inner membrane. The sequence is that of Putative chloride channel protein ClcB-like from Ralstonia nicotianae (strain ATCC BAA-1114 / GMI1000) (Ralstonia solanacearum).